The sequence spans 310 residues: Protein OS-9 homolog (310 aa).

Positions 1 to 40 (MFSSSMFPHLILPAIGSSKVRTMVLPFAFVGFFIFPICLA) are cleaved as a signal peptide. 3 N-linked (GlcNAc...) asparagine glycosylation sites follow: asparagine 60, asparagine 97, and asparagine 104. The MRH domain occupies 129–255 (NVFLIENRGY…TIHVPGLCSL (127 aa)). 2 residues coordinate a mannooligosaccharide derivative: tryptophan 139 and glutamine 151. N-linked (GlcNAc...) asparagine glycosylation is present at asparagine 204. Disulfide bonds link cysteine 208–cysteine 241 and cysteine 223–cysteine 253. Aspartate 209, arginine 215, glutamate 237, and tyrosine 243 together coordinate a mannooligosaccharide derivative. Composition is skewed to basic and acidic residues over residues 282-292 (VDHKDSQHVVD) and 301-310 (EVKEVETQSS). Positions 282–310 (VDHKDSQHVVDEVAQTSPPEVKEVETQSS) are disordered.

It belongs to the OS-9 family. As to quaternary structure, interacts with missfolded ER lumenal proteins.

It localises to the endoplasmic reticulum membrane. In terms of biological role, lectin involved in the quality control of the secretory pathway. As a member of the endoplasmic reticulum-associated degradation lumenal (ERAD-L) surveillance system, targets misfolded endoplasmic reticulum lumenal glycoproteins for degradation. This Schizosaccharomyces pombe (strain 972 / ATCC 24843) (Fission yeast) protein is Protein OS-9 homolog (yos9).